Consider the following 58-residue polypeptide: Small ribosomal subunit protein bS21 (58 aa).

A disordered region spans residues 28–58 (VLQDIRKHEHYEKPSIKKKKKSEAARKKKRF). Residues 31-42 (DIRKHEHYEKPS) show a composition bias toward basic and acidic residues. The segment covering 43-58 (IKKKKKSEAARKKKRF) has biased composition (basic residues).

This sequence belongs to the bacterial ribosomal protein bS21 family.

This Syntrophomonas wolfei subsp. wolfei (strain DSM 2245B / Goettingen) protein is Small ribosomal subunit protein bS21.